The primary structure comprises 258 residues: Type III pantothenate kinase (258 aa).

Residue 6-13 (DVGNTNIV) participates in ATP binding. Residues Tyr100 and 107–110 (GADR) contribute to the substrate site. Residue Asp109 is the Proton acceptor of the active site. K(+) is bound at residue Asp129. Thr132 serves as a coordination point for ATP. Thr184 lines the substrate pocket.

Belongs to the type III pantothenate kinase family. Homodimer. NH4(+) serves as cofactor. Requires K(+) as cofactor.

The protein resides in the cytoplasm. The catalysed reaction is (R)-pantothenate + ATP = (R)-4'-phosphopantothenate + ADP + H(+). It functions in the pathway cofactor biosynthesis; coenzyme A biosynthesis; CoA from (R)-pantothenate: step 1/5. Its function is as follows. Catalyzes the phosphorylation of pantothenate (Pan), the first step in CoA biosynthesis. In Clostridium botulinum (strain Loch Maree / Type A3), this protein is Type III pantothenate kinase.